Reading from the N-terminus, the 426-residue chain is Glutamate-1-semialdehyde 2,1-aminomutase (426 aa).

The residue at position 265 (K265) is an N6-(pyridoxal phosphate)lysine.

It belongs to the class-III pyridoxal-phosphate-dependent aminotransferase family. HemL subfamily. As to quaternary structure, homodimer. Pyridoxal 5'-phosphate is required as a cofactor.

Its subcellular location is the cytoplasm. The enzyme catalyses (S)-4-amino-5-oxopentanoate = 5-aminolevulinate. It functions in the pathway porphyrin-containing compound metabolism; protoporphyrin-IX biosynthesis; 5-aminolevulinate from L-glutamyl-tRNA(Glu): step 2/2. The sequence is that of Glutamate-1-semialdehyde 2,1-aminomutase from Actinobacillus pleuropneumoniae serotype 7 (strain AP76).